The following is a 917-amino-acid chain: Thiamine biosynthesis bifunctional protein ThiEC (917 aa).

Residues 1 to 243 (MSNEYPYASM…EGWKAVRGDK (243 aa)) are thiamine-phosphate synthase. 4-amino-2-methyl-5-(diphosphooxymethyl)pyrimidine contacts are provided by residues 48–52 (QLRAK) and D84. D85 and D109 together coordinate Mg(2+). S128 is a binding site for 4-amino-2-methyl-5-(diphosphooxymethyl)pyrimidine. 157-159 (STT) serves as a coordination point for 2-[(2R,5Z)-2-carboxy-4-methylthiazol-5(2H)-ylidene]ethyl phosphate. Residue K160 coordinates 4-amino-2-methyl-5-(diphosphooxymethyl)pyrimidine. 2-[(2R,5Z)-2-carboxy-4-methylthiazol-5(2H)-ylidene]ethyl phosphate-binding positions include G196 and 216–217 (VS). The tract at residues 256–311 (PATDTQAAQEGAAKPGSEATEKKFTNAKDAKDAQKLAKQQRVDIAARGSKQRDKAH) is disordered. A phosphomethylpyrimidine synthase region spans residues 271 to 917 (GSEATEKKFT…GGKLYSTAQE (647 aa)). A compositionally biased stretch (basic and acidic residues) spans 274-290 (ATEKKFTNAKDAKDAQK). Residues N487, M516, Y545, H581, 601–603 (SRG), 642–645 (DGLR), and E681 contribute to the 5-amino-1-(5-phospho-beta-D-ribosyl)imidazole site. H685 lines the Zn(2+) pocket. Y708 lines the 5-amino-1-(5-phospho-beta-D-ribosyl)imidazole pocket. A Zn(2+)-binding site is contributed by H749. C829, C832, and C837 together coordinate [4Fe-4S] cluster.

This sequence in the N-terminal section; belongs to the thiamine-phosphate synthase family. It in the C-terminal section; belongs to the ThiC family. Requires [4Fe-4S] cluster as cofactor.

It carries out the reaction 2-[(2R,5Z)-2-carboxy-4-methylthiazol-5(2H)-ylidene]ethyl phosphate + 4-amino-2-methyl-5-(diphosphooxymethyl)pyrimidine + 2 H(+) = thiamine phosphate + CO2 + diphosphate. It catalyses the reaction 2-(2-carboxy-4-methylthiazol-5-yl)ethyl phosphate + 4-amino-2-methyl-5-(diphosphooxymethyl)pyrimidine + 2 H(+) = thiamine phosphate + CO2 + diphosphate. The enzyme catalyses 4-methyl-5-(2-phosphooxyethyl)-thiazole + 4-amino-2-methyl-5-(diphosphooxymethyl)pyrimidine + H(+) = thiamine phosphate + diphosphate. The catalysed reaction is 5-amino-1-(5-phospho-beta-D-ribosyl)imidazole + S-adenosyl-L-methionine = 4-amino-2-methyl-5-(phosphooxymethyl)pyrimidine + CO + 5'-deoxyadenosine + formate + L-methionine + 3 H(+). It participates in cofactor biosynthesis; thiamine diphosphate biosynthesis; thiamine phosphate from 4-amino-2-methyl-5-diphosphomethylpyrimidine and 4-methyl-5-(2-phosphoethyl)-thiazole: step 1/1. In terms of biological role, condenses 4-methyl-5-(beta-hydroxyethyl)thiazole monophosphate (THZ-P) and 2-methyl-4-amino-5-hydroxymethyl pyrimidine pyrophosphate (HMP-PP) to form thiamine monophosphate (TMP). Functionally, catalyzes the synthesis of the hydroxymethylpyrimidine phosphate (HMP-P) moiety of thiamine from aminoimidazole ribotide (AIR) in a radical S-adenosyl-L-methionine (SAM)-dependent reaction. The chain is Thiamine biosynthesis bifunctional protein ThiEC (thiE/thiC) from Bifidobacterium longum (strain NCC 2705).